The chain runs to 450 residues: Salicylate synthase (450 aa).

E252 functions as the Proton donor in the catalytic mechanism. 270–271 provides a ligand contact to substrate; the sequence is GT. E297 lines the Mg(2+) pocket. Substrate is bound by residues Y385, R405, and 419–421; that span reads GAG. Mg(2+) is bound by residues E431 and E434. Residue K438 participates in substrate binding.

This sequence belongs to the anthranilate synthase component I family. Salicylate synthase subfamily. As to quaternary structure, monomer. Mg(2+) serves as cofactor.

It catalyses the reaction chorismate = isochorismate. It carries out the reaction isochorismate = salicylate + pyruvate. The enzyme catalyses chorismate = prephenate. Its pathway is siderophore biosynthesis; mycobactin biosynthesis. Functionally, involved in the incorporation of salicylate into the virulence-conferring salicylate-based siderophore mycobactin. Catalyzes the initial conversion of chorismate to yield the intermediate isochorismate (isochorismate synthase activity), and the subsequent elimination of the enolpyruvyl side chain in a lyase reaction to give salicylate (isochorismate pyruvate-lyase activity). In the absence of magnesium, MbtI displays a chorismate mutase activity and converts chorismate to prephenate. This Mycolicibacterium paratuberculosis (strain ATCC BAA-968 / K-10) (Mycobacterium paratuberculosis) protein is Salicylate synthase (mbtI).